The primary structure comprises 662 residues: Probable quinol oxidase subunit 1 (662 aa).

2 consecutive transmembrane segments (helical) span residues 14-34 and 58-78; these read WMITMAQIGAPFLVIGLIAVI and IMYLICAVLMFVRGGIDALLI. Position 102 (His-102) interacts with Fe(II)-heme a. 8 helical membrane-spanning segments follow: residues 103-123, 140-160, 187-207, 228-248, 273-293, 311-331, 336-356, and 376-396; these read GVIMIIFMAMPFIFGLWNIVV, VSFWLFFAGMILFNLSFIIGG, IAIQISGLGTLATGINFFVTI, FITTLIVILAFPPLTVALALM, FFWVWGHPEVYIVILPAFGIY, MVWATAGIAFLSFLVWVHHFF, GALINSFFSISTMLIGIPTGV, and MLFSLAFIPNFLLGGVTGVML. The Cu cation site is built by His-279, Tyr-283, His-328, and His-329. The 1'-histidyl-3'-tyrosine (His-Tyr) cross-link spans 279-283; sequence HPEVY. His-414 is a heme a3 binding site. 5 helical membrane passes run 415–435, 451–471, 493–513, 587–604, and 608–627; these read FHYTLVTGVVFACLAGLIFWY, CFWFFMIGFNVCFLPQFILGL, ISTIGALLMAIGFLFLVVSIV, PVGFWIGIFMTIGGFFLI, and VIPALICLFGIFGTMIYRSF. Fe(II)-heme a is bound at residue His-416.

The protein belongs to the heme-copper respiratory oxidase family. Cu cation is required as a cofactor. It depends on ferriheme a as a cofactor. Requires Heme A3. as cofactor.

The protein localises to the cell membrane. The enzyme catalyses 2 a quinol + O2 = 2 a quinone + 2 H2O. The protein operates within energy metabolism; oxidative phosphorylation. Functionally, catalyzes quinol oxidation with the concomitant reduction of oxygen to water. The polypeptide is Probable quinol oxidase subunit 1 (qoxB) (Staphylococcus aureus (strain USA300)).